We begin with the raw amino-acid sequence, 388 residues long: Protein RMD5 homolog (388 aa).

A LisH domain is found at 112–144 (DTHIVNQIIANFFYRQGMFDIGDCFVAETGESE). The region spanning 150-207 (SFVEMYRILEAMKRRDLEPALNWAVSNSDKLKEARSDLEMKLHSLHFLEIARGKNSKE) is the CTLH domain. The segment at 330–374 (CPVSKEQSSDDNPPMMMSCGHVLCKQTINKMSKNGSKSSFKCPYC) adopts an RING-Gid-type zinc-finger fold.

In terms of assembly, interacts with RANBPM.

It is found in the cytoplasm. This Arabidopsis thaliana (Mouse-ear cress) protein is Protein RMD5 homolog.